Consider the following 199-residue polypeptide: Pre T-cell antigen receptor alpha (199 aa).

The N-terminal stretch at 1–16 (MARTWLLLLLGVRCQA) is a signal peptide. Residues 17–146 (LPSGIAGTPF…PEPLGGTQRQ (130 aa)) lie on the Extracellular side of the membrane. Cysteine 47 and cysteine 107 form a disulfide bridge. Asparagine 67 and asparagine 117 each carry an N-linked (GlcNAc...) asparagine glycan. Residues 147–167 (VLWLSLLRLLLFKLLLLDVLL) traverse the membrane as a helical segment. The Cytoplasmic portion of the chain corresponds to 168–199 (TCSHLRLHVLAGQHLQPPPSRKSLPPTHRIWT).

In terms of assembly, heterodimer with TCRB; disulfide linked. This heterodimer assembles with CD3 proteins into a signaling-competent pre-T-cell receptor complex. Interacts with RHBDD1. Isoform 1 is expressed at higher levels than isoform 2 in the thymus while only isoform 2 is expressed in polyclonal beta-only cells. Isoform 1 shows a predominant expression in immature thymocytes.

It is found in the membrane. The protein localises to the cell membrane. Its function is as follows. Component of the pre-T-cell receptor complex (composed of PTCRA, TCRB and the CD3 complex) that plays a crucial role in early T-cell development, particularly alpha-beta T cell differentiation. Isoform 1 acts to retain most TCRB intracellularly, while isoform 2 permits higher levels of cell surface TCRB expression and facilitates signaling from the CD3-TCRB complex. In Mus musculus (Mouse), this protein is Pre T-cell antigen receptor alpha.